We begin with the raw amino-acid sequence, 465 residues long: Argininosuccinate lyase (465 aa).

Belongs to the lyase 1 family. Argininosuccinate lyase subfamily.

Its subcellular location is the cytoplasm. The catalysed reaction is 2-(N(omega)-L-arginino)succinate = fumarate + L-arginine. It functions in the pathway amino-acid biosynthesis; L-arginine biosynthesis; L-arginine from L-ornithine and carbamoyl phosphate: step 3/3. The protein is Argininosuccinate lyase of Bradyrhizobium diazoefficiens (strain JCM 10833 / BCRC 13528 / IAM 13628 / NBRC 14792 / USDA 110).